Consider the following 551-residue polypeptide: Glucans biosynthesis protein D (551 aa).

The segment at residues 1 to 32 (MNRRRFIKGSMAMAAVCGSSGIASLFSQAAFA) is a signal peptide (tat-type signal).

Belongs to the OpgD/OpgG family. Post-translationally, predicted to be exported by the Tat system. The position of the signal peptide cleavage has not been experimentally proven.

It is found in the periplasm. The protein operates within glycan metabolism; osmoregulated periplasmic glucan (OPG) biosynthesis. Its function is as follows. Probably involved in the control of the structural glucose backbone of osmoregulated periplasmic glucans (OPGs). The chain is Glucans biosynthesis protein D from Salmonella enteritidis PT4 (strain P125109).